The sequence spans 377 residues: MQQNELKTPYFSINEDKLIENLEKAKQLKDISGVKLVLALKCFSTWGVFDIIKPYLDGTTSSGPFEVKLGYETFGGETHAYSVGYSEDDVRDVADICDKMIFNSQSQLAAYRHIVEGKASIGLRLNPGVSYAGQDLANPARQFSRLGVQADHIKPEIFDGIDGVMFHMNCENKDVDAFIGLLDAISAQFGEYLDKLDWVSMGGGVFFTWPGYDIEKLGLALKAFAEKHGVQMYLEPGERIITKTTDLVVTVVDIVENVKKTAIVDSATEAHRLDTLIYNEPASILEASENGEHEYVIGSCSCLAGDQFCVANFEQPLEIGQRLHILDSAGYTMVKLNWFNGLRMPSVYCERSNGDIQKLNEFDYSDFKRSLSQWSVI.

At Lys-41 the chain carries N6-(pyridoxal phosphate)lysine. The substrate site is built by Glu-238 and Asp-274.

It belongs to the Orn/Lys/Arg decarboxylase class-II family. NspC subfamily. In terms of assembly, homodimer. Pyridoxal 5'-phosphate is required as a cofactor.

It localises to the cytoplasm. It carries out the reaction carboxynorspermidine + H(+) = norspermidine + CO2. The enzyme catalyses carboxyspermidine + H(+) = spermidine + CO2. Dithiothreitol greatly stimulates activity, maximum stimulation being at 5-20 mM dithiothreitol concentration. Fe(3+), Fe(2+) and Mn(2+) severely inhibit activity (88%, 82% and 50%, respectively), whereas Zn(2+) has a slightly inhibitory effect (23%) and Mg(2+), Ca(2+), Cu(2+) and Cu(+) have no effect. Catalyzes the decarboxylation of carboxynorspermidine and carboxyspermidine. 2,3-diaminopropionic acid, 2,4-diaminobutyric acid, L-ornithine or L-lysine cannot serve as substrates. In Vibrio alginolyticus, this protein is Carboxynorspermidine/carboxyspermidine decarboxylase.